Consider the following 343-residue polypeptide: Methionine import ATP-binding protein MetN (343 aa).

The ABC transporter domain occupies 2-241; sequence ITLSHITKQF…PKTPLAQAFI (240 aa). 38-45 serves as a coordination point for ATP; that stretch reads GASGAGKS.

Belongs to the ABC transporter superfamily. Methionine importer (TC 3.A.1.24) family. As to quaternary structure, the complex is composed of two ATP-binding proteins (MetN), two transmembrane proteins (MetI) and a solute-binding protein (MetQ).

The protein localises to the cell inner membrane. It carries out the reaction L-methionine(out) + ATP + H2O = L-methionine(in) + ADP + phosphate + H(+). The catalysed reaction is D-methionine(out) + ATP + H2O = D-methionine(in) + ADP + phosphate + H(+). In terms of biological role, part of the ABC transporter complex MetNIQ involved in methionine import. Responsible for energy coupling to the transport system. The chain is Methionine import ATP-binding protein MetN from Sodalis glossinidius (strain morsitans).